A 145-amino-acid polypeptide reads, in one-letter code: Protein SprT-like (145 aa).

The region spanning 5-140 (DYVREVSLAD…ACGRCHGRLI (136 aa)) is the SprT-like domain. A Zn(2+)-binding site is contributed by His-64. Glu-65 is a catalytic residue. His-68 is a binding site for Zn(2+).

Belongs to the SprT family. It depends on Zn(2+) as a cofactor.

It localises to the cytoplasm. The sequence is that of Protein SprT-like from Streptococcus equi subsp. zooepidemicus (strain MGCS10565).